The primary structure comprises 145 residues: D-aminoacyl-tRNA deacylase (145 aa).

Positions 137–138 match the Gly-cisPro motif, important for rejection of L-amino acids motif; the sequence is GP.

The protein belongs to the DTD family. As to quaternary structure, homodimer.

It localises to the cytoplasm. It catalyses the reaction glycyl-tRNA(Ala) + H2O = tRNA(Ala) + glycine + H(+). The enzyme catalyses a D-aminoacyl-tRNA + H2O = a tRNA + a D-alpha-amino acid + H(+). In terms of biological role, an aminoacyl-tRNA editing enzyme that deacylates mischarged D-aminoacyl-tRNAs. Also deacylates mischarged glycyl-tRNA(Ala), protecting cells against glycine mischarging by AlaRS. Acts via tRNA-based rather than protein-based catalysis; rejects L-amino acids rather than detecting D-amino acids in the active site. By recycling D-aminoacyl-tRNA to D-amino acids and free tRNA molecules, this enzyme counteracts the toxicity associated with the formation of D-aminoacyl-tRNA entities in vivo and helps enforce protein L-homochirality. This Lactobacillus helveticus (strain DPC 4571) protein is D-aminoacyl-tRNA deacylase.